Consider the following 757-residue polypeptide: Cell cycle progression protein 1 (757 aa).

Topologically, residues M1–K217 are cytoplasmic. The segment at M1–Q308 is interaction with MCF2L and SRC. The interval V152–S207 is disordered. A compositionally biased stretch (basic residues) spans F175 to T184. S186 carries the phosphoserine modification. Residues S190–S207 show a composition bias toward basic and acidic residues. The chain crosses the membrane as a helical; Signal-anchor for type II membrane protein span at residues C218–I238. Residues Q239–L757 lie on the Lumenal side of the membrane. Coiled coils occupy residues R248–F272 and E306–R450. The segment covering Q458 to K468 has biased composition (basic and acidic residues). Residues Q458–E483 form a disordered region. The segment covering K469 to N479 has biased composition (basic residues). Positions V504–K530 form a coiled coil.

The protein belongs to the CCPG1 family. As to quaternary structure, interacts with MCF2L. May interact with MCF2, ARHGEF1, BCR, VAV1 and FGD1, but not with TIAM1. Interacts with GTP-bound CDC42 and SRC.

The protein localises to the cytoplasmic granule membrane. In terms of biological role, acts as an assembly platform for Rho protein signaling complexes. Limits guanine nucleotide exchange activity of MCF2L toward RHOA, which results in an inhibition of both its transcriptional activation ability and its transforming activity. Does not inhibit activity of MCF2L toward CDC42, or activity of MCF2 toward either RHOA or CDC42. May be involved in cell cycle regulation. In Homo sapiens (Human), this protein is Cell cycle progression protein 1 (CCPG1).